The sequence spans 519 residues: Zinc finger protein 692 (519 aa).

A disordered region spans residues 123–314 (GPSLSPTPSE…PAWDEDTAQI (192 aa)). Residues 145–155 (RSWCSEATSGQ) are compositionally biased toward polar residues. Phosphoserine is present on serine 162. Over residues 164 to 173 (HDERTQEARL) the composition is skewed to basic and acidic residues. A compositionally biased stretch (pro residues) spans 177–187 (VGPPPETFPPP). Acidic residues predominate over residues 188–206 (GEEEGEEEEDNDEDEEEML). Serine 231 is modified (phosphoserine). A compositionally biased stretch (low complexity) spans 247–266 (AALSSPLAVPALSASSLSSR). Over residues 277–303 (PQLSRTPQAAQQTEALASTGSQAQSAP) the composition is skewed to polar residues. 5 C2H2-type zinc fingers span residues 328–353 (MPCDFPGCGRIFSNRQYLNHHKKYQH), 359–383 (FSCPEPACGKSFNFKKHLKEHMKLH), 389–411 (YICEFCARSFRTSSNLVIHRRIH), 417–439 (LQCEICGFTCRQKASLNWHQRKH), and 448–471 (FPCEFCGKRFEKPDSVAAHRSKSH). The interval 469 to 519 (KSHPALLLAPQESPSGPLEPCPSISAPGPLGSSEGSRPSASPQAPTLLPQQ) is disordered. Serine 470 carries the post-translational modification Phosphoserine; by AMPK. Positions 501 to 519 (SEGSRPSASPQAPTLLPQQ) are enriched in polar residues.

Belongs to the krueppel C2H2-type zinc-finger protein family. Phosphorylation at Ser-470 results in loss of DNA-binding activity. In terms of tissue distribution, ubiquitous. Highly expressed in brain, thymus and spleen.

The protein localises to the nucleus. Functionally, may act as an transcriptional repressor for PCK1 gene expression, in turn may participate in the hepatic gluconeogenesis regulation through the activated AMPK signaling pathway. In Homo sapiens (Human), this protein is Zinc finger protein 692 (ZNF692).